We begin with the raw amino-acid sequence, 168 residues long: Crossover junction endodeoxyribonuclease RuvC (168 aa).

Catalysis depends on residues aspartate 9, glutamate 70, and aspartate 145. Mg(2+)-binding residues include aspartate 9, glutamate 70, and aspartate 145.

The protein belongs to the RuvC family. As to quaternary structure, homodimer which binds Holliday junction (HJ) DNA. The HJ becomes 2-fold symmetrical on binding to RuvC with unstacked arms; it has a different conformation from HJ DNA in complex with RuvA. In the full resolvosome a probable DNA-RuvA(4)-RuvB(12)-RuvC(2) complex forms which resolves the HJ. Requires Mg(2+) as cofactor.

The protein resides in the cytoplasm. It catalyses the reaction Endonucleolytic cleavage at a junction such as a reciprocal single-stranded crossover between two homologous DNA duplexes (Holliday junction).. In terms of biological role, the RuvA-RuvB-RuvC complex processes Holliday junction (HJ) DNA during genetic recombination and DNA repair. Endonuclease that resolves HJ intermediates. Cleaves cruciform DNA by making single-stranded nicks across the HJ at symmetrical positions within the homologous arms, yielding a 5'-phosphate and a 3'-hydroxyl group; requires a central core of homology in the junction. The consensus cleavage sequence is 5'-(A/T)TT(C/G)-3'. Cleavage occurs on the 3'-side of the TT dinucleotide at the point of strand exchange. HJ branch migration catalyzed by RuvA-RuvB allows RuvC to scan DNA until it finds its consensus sequence, where it cleaves and resolves the cruciform DNA. The protein is Crossover junction endodeoxyribonuclease RuvC of Chlamydia felis (strain Fe/C-56) (Chlamydophila felis).